Reading from the N-terminus, the 405-residue chain is PP2A regulatory subunit TAP46 (405 aa).

Disordered regions lie at residues 159-189 (ERRG…SEEE) and 352-405 (ATTS…TPCG). Residues 165–174 (TKASALSTPV) are compositionally biased toward polar residues. Acidic residues-rich tracts occupy residues 176–189 (SGED…SEEE) and 367–377 (EDEEDDDEDEE). Residues 378 to 393 (AVMKARAFDDWKDDNP) show a composition bias toward basic and acidic residues.

Belongs to the IGBP1/TAP42 family. In terms of assembly, interacts with the 36 kDa catalytic subunit (subunit C) of PP2A. Interacts with PP2A1 and PP2A2. Interacts with PP2A3, PPX1 and FYPP1. Interacts with FYPP3 and ABI5. Interacts with ATPK1/S6K1 and ATPK2/S6K2. Interacts with TIP41L. Phosphorylated by TOR kinase in vitro. Ubiquitous. Highly expressed in seed, and particularly in the embryo.

Its function is as follows. Involved in the positive regulation of the TOR signaling pathway. Acts as a negative regulator of PP2A catalytic activity. Plays a positive role in the ABA-regulated inhibition of germination, probably throught its interaction with ABI5. In Arabidopsis thaliana (Mouse-ear cress), this protein is PP2A regulatory subunit TAP46.